The sequence spans 899 residues: Core protein VP3 (899 aa).

Residues 1–21 (MADPPDANVPKTSPYLKGDEL) form a disordered region.

This sequence belongs to the orbivirus VP3 family.

It localises to the virion. Functionally, the VP3 protein is one of the five proteins (with VP1, VP4, VP6 and VP7) which form the inner capsid of the virus. The polypeptide is Core protein VP3 (Segment-3) (Epizootic hemorrhagic disease virus 1 (EHDV-1)).